We begin with the raw amino-acid sequence, 261 residues long: NAD-capped RNA hydrolase NudC (261 aa).

R69 serves as a coordination point for substrate. Zn(2+) contacts are provided by C98 and C101. A substrate-binding site is contributed by E111. Residues C116 and C119 each coordinate Zn(2+). Y124 contacts substrate. One can recognise a Nudix hydrolase domain in the interval 125 to 248 (PQIAPCIIVA…TVARRLIEDT (124 aa)). Positions 158, 174, and 178 each coordinate a divalent metal cation. The Nudix box motif lies at 159–180 (GFVEVGETLEQTVAREVMEESS). A substrate-binding site is contributed by 192–199 (QPWPFPQS). E219 lines the a divalent metal cation pocket. A241 contacts substrate.

This sequence belongs to the Nudix hydrolase family. NudC subfamily. In terms of assembly, homodimer. Mg(2+) serves as cofactor. The cofactor is Mn(2+). Zn(2+) is required as a cofactor.

The enzyme catalyses a 5'-end NAD(+)-phospho-ribonucleoside in mRNA + H2O = a 5'-end phospho-adenosine-phospho-ribonucleoside in mRNA + beta-nicotinamide D-ribonucleotide + 2 H(+). The catalysed reaction is NAD(+) + H2O = beta-nicotinamide D-ribonucleotide + AMP + 2 H(+). It catalyses the reaction NADH + H2O = reduced beta-nicotinamide D-ribonucleotide + AMP + 2 H(+). MRNA decapping enzyme that specifically removes the nicotinamide adenine dinucleotide (NAD) cap from a subset of mRNAs by hydrolyzing the diphosphate linkage to produce nicotinamide mononucleotide (NMN) and 5' monophosphate mRNA. The NAD-cap is present at the 5'-end of some mRNAs and stabilizes RNA against 5'-processing. Has preference for mRNAs with a 5'-end purine. Catalyzes the hydrolysis of a broad range of dinucleotide pyrophosphates. The protein is NAD-capped RNA hydrolase NudC of Erwinia tasmaniensis (strain DSM 17950 / CFBP 7177 / CIP 109463 / NCPPB 4357 / Et1/99).